An 81-amino-acid polypeptide reads, in one-letter code: Large ribosomal subunit protein bL31B (81 aa).

This sequence belongs to the bacterial ribosomal protein bL31 family. Type B subfamily. Part of the 50S ribosomal subunit.

The chain is Large ribosomal subunit protein bL31B from Borrelia garinii subsp. bavariensis (strain ATCC BAA-2496 / DSM 23469 / PBi) (Borreliella bavariensis).